Consider the following 364-residue polypeptide: tRNA 2-selenouridine synthase (364 aa).

A Rhodanese domain is found at 14-137 (LIADTPIIDV…LRQTAIQATI (124 aa)). Catalysis depends on Cys-97, which acts as the S-selanylcysteine intermediate.

The protein belongs to the SelU family. In terms of assembly, monomer.

It catalyses the reaction 5-methylaminomethyl-2-thiouridine(34) in tRNA + selenophosphate + (2E)-geranyl diphosphate + H2O + H(+) = 5-methylaminomethyl-2-selenouridine(34) in tRNA + (2E)-thiogeraniol + phosphate + diphosphate. It carries out the reaction 5-methylaminomethyl-2-thiouridine(34) in tRNA + (2E)-geranyl diphosphate = 5-methylaminomethyl-S-(2E)-geranyl-thiouridine(34) in tRNA + diphosphate. The catalysed reaction is 5-methylaminomethyl-S-(2E)-geranyl-thiouridine(34) in tRNA + selenophosphate + H(+) = 5-methylaminomethyl-2-(Se-phospho)selenouridine(34) in tRNA + (2E)-thiogeraniol. The enzyme catalyses 5-methylaminomethyl-2-(Se-phospho)selenouridine(34) in tRNA + H2O = 5-methylaminomethyl-2-selenouridine(34) in tRNA + phosphate. Involved in the post-transcriptional modification of the uridine at the wobble position (U34) of tRNA(Lys), tRNA(Glu) and tRNA(Gln). Catalyzes the conversion of 2-thiouridine (S2U-RNA) to 2-selenouridine (Se2U-RNA). Acts in a two-step process involving geranylation of 2-thiouridine (S2U) to S-geranyl-2-thiouridine (geS2U) and subsequent selenation of the latter derivative to 2-selenouridine (Se2U) in the tRNA chain. The chain is tRNA 2-selenouridine synthase from Escherichia coli O17:K52:H18 (strain UMN026 / ExPEC).